A 303-amino-acid polypeptide reads, in one-letter code: Olfactory receptor 10A2 (303 aa).

The Extracellular segment spans residues 1 to 12 (MSFSSLPTEIQS). A helical membrane pass occupies residues 13–33 (LLFLTFLTIYLVTLMGNCLII). Residues 34-41 (LVTLADPM) lie on the Cytoplasmic side of the membrane. Residues 42–62 (LHSPMYFFLRNLSFLEIGFNL) form a helical membrane-spanning segment. Residues 63–86 (VIVPKMLGTLLAQDTTISFLGCAT) lie on the Extracellular side of the membrane. Residues Cys84 and Cys176 are joined by a disulfide bond. The helical transmembrane segment at 87–107 (QMYFFFFFGVAECFLLATMAY) threads the bilayer. Residues 108-126 (DRYVAICSPLHYPVIMNQR) are Cytoplasmic-facing. Residues 127–147 (TRAKLAAASWFPGFPVATVQT) form a helical membrane-spanning segment. The Extracellular portion of the chain corresponds to 148 to 184 (TWLFSFPFCGTNKVNHFFCDSPPVLRLVCADTALFEI). A helical membrane pass occupies residues 185–204 (YAIVGTILVVMIPCLLILCS). Over 205–224 (YTHIAAAILKIPSAKGKNKA) the chain is Cytoplasmic. The helical transmembrane segment at 225–245 (FSTCSSHLLVVSLFYISLSLT) threads the bilayer. Topologically, residues 246-258 (YFRPKSNNSPEGK) are extracellular. A helical transmembrane segment spans residues 259 to 279 (KLLSLSYTVMTPMLNPIIYSL). Residues 280 to 301 (RNNEVKNALSRTVSKALALRNC) are Cytoplasmic-facing.

This sequence belongs to the G-protein coupled receptor 1 family.

Its subcellular location is the cell membrane. In terms of biological role, odorant receptor. The polypeptide is Olfactory receptor 10A2 (OR10A2) (Homo sapiens (Human)).